A 242-amino-acid chain; its full sequence is 3-deoxy-manno-octulosonate cytidylyltransferase (242 aa).

It belongs to the KdsB family.

It localises to the cytoplasm. It catalyses the reaction 3-deoxy-alpha-D-manno-oct-2-ulosonate + CTP = CMP-3-deoxy-beta-D-manno-octulosonate + diphosphate. Its pathway is nucleotide-sugar biosynthesis; CMP-3-deoxy-D-manno-octulosonate biosynthesis; CMP-3-deoxy-D-manno-octulosonate from 3-deoxy-D-manno-octulosonate and CTP: step 1/1. It participates in bacterial outer membrane biogenesis; lipopolysaccharide biosynthesis. Activates KDO (a required 8-carbon sugar) for incorporation into bacterial lipopolysaccharide in Gram-negative bacteria. The chain is 3-deoxy-manno-octulosonate cytidylyltransferase from Anaeromyxobacter dehalogenans (strain 2CP-1 / ATCC BAA-258).